A 301-amino-acid chain; its full sequence is Homoserine O-acetyltransferase (301 aa).

Residue Cys142 is the Acyl-thioester intermediate of the active site. Residues Lys163 and Ser192 each coordinate substrate. The active-site Proton acceptor is the His235. Glu237 is a catalytic residue. Position 249 (Arg249) interacts with substrate.

Belongs to the MetA family.

Its subcellular location is the cytoplasm. It carries out the reaction L-homoserine + acetyl-CoA = O-acetyl-L-homoserine + CoA. The protein operates within amino-acid biosynthesis; L-methionine biosynthesis via de novo pathway; O-acetyl-L-homoserine from L-homoserine: step 1/1. Functionally, transfers an acetyl group from acetyl-CoA to L-homoserine, forming acetyl-L-homoserine. The protein is Homoserine O-acetyltransferase of Novosphingobium aromaticivorans (strain ATCC 700278 / DSM 12444 / CCUG 56034 / CIP 105152 / NBRC 16084 / F199).